The chain runs to 200 residues: dTTP/UTP pyrophosphatase (200 aa).

The active-site Proton acceptor is the Asp-81.

The protein belongs to the Maf family. YhdE subfamily. A divalent metal cation serves as cofactor.

Its subcellular location is the cytoplasm. It carries out the reaction dTTP + H2O = dTMP + diphosphate + H(+). The enzyme catalyses UTP + H2O = UMP + diphosphate + H(+). Its function is as follows. Nucleoside triphosphate pyrophosphatase that hydrolyzes dTTP and UTP. May have a dual role in cell division arrest and in preventing the incorporation of modified nucleotides into cellular nucleic acids. In Albidiferax ferrireducens (strain ATCC BAA-621 / DSM 15236 / T118) (Rhodoferax ferrireducens), this protein is dTTP/UTP pyrophosphatase.